Reading from the N-terminus, the 873-residue chain is Bifunctional uridylyltransferase/uridylyl-removing enzyme (873 aa).

Positions 1 to 332 (MAFQSPLTFN…NGGETEPAVI (332 aa)) are uridylyltransferase. Residues 333–692 (INEDFQRRGR…MSKKATRGGT (360 aa)) form a uridylyl-removing region. In terms of domain architecture, HD spans 451-573 (VDEHSVRLLN…VRDEERLEYL (123 aa)). 2 ACT domains span residues 693–773 (EVFV…VKTR) and 800–873 (LMEL…ELAP).

The protein belongs to the GlnD family. The cofactor is Mg(2+).

It catalyses the reaction [protein-PII]-L-tyrosine + UTP = [protein-PII]-uridylyl-L-tyrosine + diphosphate. It carries out the reaction [protein-PII]-uridylyl-L-tyrosine + H2O = [protein-PII]-L-tyrosine + UMP + H(+). Uridylyltransferase (UTase) activity is inhibited by glutamine, while glutamine activates uridylyl-removing (UR) activity. In terms of biological role, modifies, by uridylylation and deuridylylation, the PII regulatory proteins (GlnB and homologs), in response to the nitrogen status of the cell that GlnD senses through the glutamine level. Under low glutamine levels, catalyzes the conversion of the PII proteins and UTP to PII-UMP and PPi, while under higher glutamine levels, GlnD hydrolyzes PII-UMP to PII and UMP (deuridylylation). Thus, controls uridylylation state and activity of the PII proteins, and plays an important role in the regulation of nitrogen assimilation and metabolism. This chain is Bifunctional uridylyltransferase/uridylyl-removing enzyme, found in Vibrio vulnificus (strain CMCP6).